The following is a 93-amino-acid chain: Stromal cell-derived factor 1 (93 aa).

The first 21 residues, 1–21 (MDIRTLALFSILLGSLCLSEG), serve as a signal peptide directing secretion. Positions 22-23 (KP) match the Receptor activation motif motif. The interval 29-33 (RCPCR) is receptor and heparin binding. Cystine bridges form between Cys30/Cys55 and Cys32/Cys71. Heparin contacts are provided by residues 41-51 (KSNIKHLKILS), Arg62, Gln69, and Lys85. Receptor binding regions lie at residues 48–50 (KIL) and 60–64 (VARLK).

It belongs to the intercrine alpha (chemokine CxC) family. In terms of assembly, monomer or homodimer; in equilibrium. Dimer formation is induced by non acidic pH and the presence of multivalent anions, and by binding to cxcr4 or heparin.

It is found in the secreted. Functionally, chemoattractant. Activates the C-X-C chemokine receptor cxcr4 to induce a rapid and transient rise in the level of intracellular calcium ions, and chemotaxis. Signaling with cxcr4 mediates the directional movement of mesodermal cells during gastrulation. Binds to the allosteric site (site 2) of integrins and activates them in a cxcr4-independent manner. In Xenopus tropicalis (Western clawed frog), this protein is Stromal cell-derived factor 1.